The chain runs to 449 residues: Glucose-6-phosphate isomerase (449 aa).

The active-site Proton donor is the Glu-291. Residues His-312 and Lys-426 contribute to the active site.

Belongs to the GPI family.

It localises to the cytoplasm. It carries out the reaction alpha-D-glucose 6-phosphate = beta-D-fructose 6-phosphate. The protein operates within carbohydrate biosynthesis; gluconeogenesis. Its pathway is carbohydrate degradation; glycolysis; D-glyceraldehyde 3-phosphate and glycerone phosphate from D-glucose: step 2/4. Its function is as follows. Catalyzes the reversible isomerization of glucose-6-phosphate to fructose-6-phosphate. This Streptococcus pneumoniae (strain CGSP14) protein is Glucose-6-phosphate isomerase.